The following is a 574-amino-acid chain: Developmental and secondary metabolism regulator veA (574 aa).

4 disordered regions span residues M1 to T22, E39 to P60, R255 to K500, and R513 to R540. Residues G25–R230 form the Velvet domain. Residues E39–C44 carry the Nuclear localization signal motif. Pro residues-rich tracts occupy residues R314–A323 and P330–H341. Composition is skewed to polar residues over residues P343–S353, H385–E394, R406–P415, and V448–T458. Residues Q457–K501 form a PEST region. Composition is skewed to low complexity over residues P459 to S474 and S482 to S493. A compositionally biased stretch (basic and acidic residues) spans R513–P525.

This sequence belongs to the velvet family. VeA subfamily. As to quaternary structure, component of the heterotrimeric velvet complex composed of laeA, veA and velB; VeA acting as a bridging protein between laeA and velB.

Its subcellular location is the nucleus. The protein resides in the cytoplasm. Component of the velvet transcription factor complex that controls sexual/asexual developmental ratio in response to light, promoting sexual development in the darkness while stimulating asexual sporulation under illumination. The velvet complex hat acts as a global regulator for secondary metabolite gene expression. Controls the expression of the penicillin gene cluster. In Aspergillus oryzae (strain ATCC 42149 / RIB 40) (Yellow koji mold), this protein is Developmental and secondary metabolism regulator veA.